A 133-amino-acid chain; its full sequence is Phosphomevalonate dehydratase small subunit (133 aa).

Serine 62 acts as the Proton acceptor in catalysis.

This sequence belongs to the AcnX type II small subunit family. In terms of assembly, heterodimer composed of a large subunit (PMDh-L) and a small subunit (PMDh-S).

It catalyses the reaction (R)-5-phosphomevalonate = (2E)-3-methyl-5-phosphooxypent-2-enoate + H2O. Its pathway is isoprenoid biosynthesis; isopentenyl diphosphate biosynthesis via mevalonate pathway. Functionally, component of a hydro-lyase that catalyzes the dehydration of mevalonate 5-phosphate (MVA5P) to form trans-anhydromevalonate 5-phosphate (tAHMP). Involved in the archaeal mevalonate (MVA) pathway, which provides fundamental precursors for isoprenoid biosynthesis, such as isopentenyl diphosphate (IPP) and dimethylallyl diphosphate (DMAPP). This is Phosphomevalonate dehydratase small subunit from Thermococcus kodakarensis (strain ATCC BAA-918 / JCM 12380 / KOD1) (Pyrococcus kodakaraensis (strain KOD1)).